The following is a 310-amino-acid chain: Iron ABC transporter substrate-binding lipoprotein MtsA (310 aa).

The signal sequence occupies residues 1 to 20 (MGKRMSLILGAFLSVFLLVA). The N-palmitoyl cysteine moiety is linked to residue Cys-21. The S-diacylglycerol cysteine moiety is linked to residue Cys-21. Fe(2+) contacts are provided by His-68, His-140, Glu-206, and Asp-281.

Belongs to the bacterial solute-binding protein 9 family. Lipoprotein receptor antigen (Lrai) subfamily.

The protein localises to the cell membrane. Part of the ATP-binding cassette (ABC) transport system MtsABC involved in iron import. Binds iron with high affinity and specificity and delivers it to the membrane permease for translocation into the cytoplasm. Has low affinity for Zn(2+) and Cu(2+). The polypeptide is Iron ABC transporter substrate-binding lipoprotein MtsA (mtsA) (Streptococcus pyogenes serotype M1).